The following is a 720-amino-acid chain: DNA replication licensing factor mcm7 (720 aa).

A C4-type zinc finger spans residues 183–210; that stretch reads CDQCGAETYQPIQSPTFMPLIMCPSREC. The 207-residue stretch at 331–537 folds into the MCM domain; it reads FYEKLAASIA…NDLRLAQHIT (207 aa). Tyr344, Gly383, Ala385, Lys386, Ser387, Asn488, Arg513, and Arg603 together coordinate ATP. Positions 512 to 515 match the Arginine finger motif; sequence SRFD.

The protein belongs to the MCM family. In terms of assembly, component of the mcm2-7 complex (RLF-M). The complex forms a toroidal hexameric ring with the proposed subunit order mcm2-mcm6-mcm4-mcm7-mcm3-mcm5. The heterodimer of mmcm3/mcm5 interacts with mcm4, mmcm6, mcm7 and weakly with mcm2. The N-terminus is required for interaction with mmcm3, though this interaction may not be direct, and remains in a complex with mmcm3 throughout the cell cycle. Begins to associate with zmcm6 at the neurula stage. Component of the replisome complex. Component of the CMG helicase complex, composed of the mcm2-7 complex, the GINS complex and cdc45. Post-translationally, ubiquitinated by traip when forks converge following formation of DNA interstrand cross-links. Short ubiquitin chains on mcm7 promote recruitment of DNA glycosylase neil3. If the interstrand cross-link cannot be cleaved by neil3, the ubiquitin chains continue to grow on mcm7, promoting the unloading of the CMG helicase complex by the vcp/p97 ATPase.

It is found in the nucleus. The protein localises to the chromosome. It carries out the reaction ATP + H2O = ADP + phosphate + H(+). Functionally, acts as a component of the mcm2-7 complex (mcm complex) which is the putative replicative helicase essential for 'once per cell cycle' DNA replication initiation and elongation in eukaryotic cells. The active ATPase sites in the mcm2-7 ring are formed through the interaction surfaces of two neighboring subunits such that a critical structure of a conserved arginine finger motif is provided in trans relative to the ATP-binding site of the Walker A box of the adjacent subunit. The six ATPase active sites, however, are likely to contribute differentially to the complex helicase activity. The existence of maternal and zygotic forms of mcm3 and mcm6 suggests that specific forms of mcm2-7 complexes may be used during different stages of development. The protein is DNA replication licensing factor mcm7 of Xenopus tropicalis (Western clawed frog).